The chain runs to 185 residues: Elongation factor P (185 aa).

The protein belongs to the elongation factor P family.

The protein localises to the cytoplasm. The protein operates within protein biosynthesis; polypeptide chain elongation. Its function is as follows. Involved in peptide bond synthesis. Stimulates efficient translation and peptide-bond synthesis on native or reconstituted 70S ribosomes in vitro. Probably functions indirectly by altering the affinity of the ribosome for aminoacyl-tRNA, thus increasing their reactivity as acceptors for peptidyl transferase. In Rippkaea orientalis (strain PCC 8801 / RF-1) (Cyanothece sp. (strain PCC 8801)), this protein is Elongation factor P.